The primary structure comprises 209 residues: Thiamine-phosphate synthase (209 aa).

4-amino-2-methyl-5-(diphosphooxymethyl)pyrimidine is bound by residues 36-40 and Asn68; that span reads QYRDK. Mg(2+)-binding residues include Asp69 and Asp87. Thr106 is a 4-amino-2-methyl-5-(diphosphooxymethyl)pyrimidine binding site. Residue 133 to 135 coordinates 2-[(2R,5Z)-2-carboxy-4-methylthiazol-5(2H)-ylidene]ethyl phosphate; it reads SST. Lys136 serves as a coordination point for 4-amino-2-methyl-5-(diphosphooxymethyl)pyrimidine. A 2-[(2R,5Z)-2-carboxy-4-methylthiazol-5(2H)-ylidene]ethyl phosphate-binding site is contributed by Gly163.

The protein belongs to the thiamine-phosphate synthase family. Mg(2+) serves as cofactor.

It carries out the reaction 2-[(2R,5Z)-2-carboxy-4-methylthiazol-5(2H)-ylidene]ethyl phosphate + 4-amino-2-methyl-5-(diphosphooxymethyl)pyrimidine + 2 H(+) = thiamine phosphate + CO2 + diphosphate. The enzyme catalyses 2-(2-carboxy-4-methylthiazol-5-yl)ethyl phosphate + 4-amino-2-methyl-5-(diphosphooxymethyl)pyrimidine + 2 H(+) = thiamine phosphate + CO2 + diphosphate. The catalysed reaction is 4-methyl-5-(2-phosphooxyethyl)-thiazole + 4-amino-2-methyl-5-(diphosphooxymethyl)pyrimidine + H(+) = thiamine phosphate + diphosphate. Its pathway is cofactor biosynthesis; thiamine diphosphate biosynthesis; thiamine phosphate from 4-amino-2-methyl-5-diphosphomethylpyrimidine and 4-methyl-5-(2-phosphoethyl)-thiazole: step 1/1. Functionally, condenses 4-methyl-5-(beta-hydroxyethyl)thiazole monophosphate (THZ-P) and 2-methyl-4-amino-5-hydroxymethyl pyrimidine pyrophosphate (HMP-PP) to form thiamine monophosphate (TMP). The protein is Thiamine-phosphate synthase of Azotobacter vinelandii (strain DJ / ATCC BAA-1303).